The sequence spans 322 residues: Arginase (322 aa).

H113, D141, H143, and D145 together coordinate Mn(2+). Residues 143 to 147 (HADIN), 154 to 156 (SGN), and D200 each bind substrate. Positions 247 and 249 each coordinate Mn(2+). Substrate contacts are provided by T261 and E292.

The protein belongs to the arginase family. Homotrimer. Requires Mn(2+) as cofactor.

The catalysed reaction is L-arginine + H2O = urea + L-ornithine. It functions in the pathway nitrogen metabolism; urea cycle; L-ornithine and urea from L-arginine: step 1/1. This Coccidioides posadasii (strain C735) (Valley fever fungus) protein is Arginase (ARG).